Here is a 28-residue protein sequence, read N- to C-terminus: Venom protein (28 aa).

The disordered stretch occupies residues 1–28; that stretch reads KEGYPDGQNGKKIPCAINDNISKTXEQA. The segment covering 19–28 has biased composition (polar residues); sequence DNISKTXEQA.

Expressed by the venom gland.

It localises to the secreted. Causes symptoms of mild intoxication and transient paralysis in insects (A.domestica). This is Venom protein from Rhopalurus junceus (Caribbean blue scorpion).